A 280-amino-acid chain; its full sequence is Dopamine receptor-interacting protein 1 (280 aa).

As to quaternary structure, interacts with DRD1, the dopamine D1 receptor.

Could be a regulator of the dopamine receptor signaling pathway. In Bos taurus (Bovine), this protein is Dopamine receptor-interacting protein 1 (DORIP1).